The sequence spans 331 residues: Ferredoxin--NADP reductase (331 aa).

7 residues coordinate FAD: Glu38, Gln46, Tyr51, Ala91, Leu125, Asp282, and Ser323.

Belongs to the ferredoxin--NADP reductase type 2 family. Homodimer. FAD serves as cofactor.

The enzyme catalyses 2 reduced [2Fe-2S]-[ferredoxin] + NADP(+) + H(+) = 2 oxidized [2Fe-2S]-[ferredoxin] + NADPH. This Deinococcus geothermalis (strain DSM 11300 / CIP 105573 / AG-3a) protein is Ferredoxin--NADP reductase.